A 262-amino-acid chain; its full sequence is tRNA (guanine-N(1)-)-methyltransferase (262 aa).

S-adenosyl-L-methionine-binding positions include Gly-113 and 137 to 142 (IGDYVL).

It belongs to the RNA methyltransferase TrmD family. In terms of assembly, homodimer.

The protein localises to the cytoplasm. It catalyses the reaction guanosine(37) in tRNA + S-adenosyl-L-methionine = N(1)-methylguanosine(37) in tRNA + S-adenosyl-L-homocysteine + H(+). In terms of biological role, specifically methylates guanosine-37 in various tRNAs. This Saccharopolyspora erythraea (strain ATCC 11635 / DSM 40517 / JCM 4748 / NBRC 13426 / NCIMB 8594 / NRRL 2338) protein is tRNA (guanine-N(1)-)-methyltransferase.